Here is a 134-residue protein sequence, read N- to C-terminus: MSLLNIFDIAGSALSAQSQRLNVSASNMANADSVTGPDGQPYRAKQVVFQVAAQPGQETGGVRVAQIIDDPAPDRLVFQPGNPLADAKGYVRMPNVDVTGEMVNTISASRSYQANVEVLNTTKSLMLKTLTLGQ.

The protein belongs to the flagella basal body rod proteins family. As to quaternary structure, the basal body constitutes a major portion of the flagellar organelle and consists of four rings (L,P,S, and M) mounted on a central rod. The rod consists of about 26 subunits of FlgG in the distal portion, and FlgB, FlgC and FlgF are thought to build up the proximal portion of the rod with about 6 subunits each.

It is found in the bacterial flagellum basal body. The sequence is that of Flagellar basal-body rod protein FlgC (flgC) from Yersinia enterocolitica.